Here is a 211-residue protein sequence, read N- to C-terminus: Thiamine-phosphate synthase (211 aa).

4-amino-2-methyl-5-(diphosphooxymethyl)pyrimidine is bound by residues 37–41 (QLRIK) and asparagine 69. Mg(2+) contacts are provided by aspartate 70 and aspartate 89. Residue serine 108 participates in 4-amino-2-methyl-5-(diphosphooxymethyl)pyrimidine binding. Residue 134-136 (TQT) coordinates 2-[(2R,5Z)-2-carboxy-4-methylthiazol-5(2H)-ylidene]ethyl phosphate. A 4-amino-2-methyl-5-(diphosphooxymethyl)pyrimidine-binding site is contributed by lysine 137. 2-[(2R,5Z)-2-carboxy-4-methylthiazol-5(2H)-ylidene]ethyl phosphate is bound by residues glycine 166 and 186-187 (VS).

It belongs to the thiamine-phosphate synthase family. Mg(2+) is required as a cofactor.

It catalyses the reaction 2-[(2R,5Z)-2-carboxy-4-methylthiazol-5(2H)-ylidene]ethyl phosphate + 4-amino-2-methyl-5-(diphosphooxymethyl)pyrimidine + 2 H(+) = thiamine phosphate + CO2 + diphosphate. The enzyme catalyses 2-(2-carboxy-4-methylthiazol-5-yl)ethyl phosphate + 4-amino-2-methyl-5-(diphosphooxymethyl)pyrimidine + 2 H(+) = thiamine phosphate + CO2 + diphosphate. The catalysed reaction is 4-methyl-5-(2-phosphooxyethyl)-thiazole + 4-amino-2-methyl-5-(diphosphooxymethyl)pyrimidine + H(+) = thiamine phosphate + diphosphate. Its pathway is cofactor biosynthesis; thiamine diphosphate biosynthesis; thiamine phosphate from 4-amino-2-methyl-5-diphosphomethylpyrimidine and 4-methyl-5-(2-phosphoethyl)-thiazole: step 1/1. Functionally, condenses 4-methyl-5-(beta-hydroxyethyl)thiazole monophosphate (THZ-P) and 2-methyl-4-amino-5-hydroxymethyl pyrimidine pyrophosphate (HMP-PP) to form thiamine monophosphate (TMP). This is Thiamine-phosphate synthase from Enterobacter sp. (strain 638).